The chain runs to 446 residues: Phosphoglucosamine mutase (446 aa).

The Phosphoserine intermediate role is filled by serine 100. Residues serine 100, aspartate 239, aspartate 241, and aspartate 243 each coordinate Mg(2+). Serine 100 carries the post-translational modification Phosphoserine.

The protein belongs to the phosphohexose mutase family. It depends on Mg(2+) as a cofactor. Post-translationally, activated by phosphorylation.

It catalyses the reaction alpha-D-glucosamine 1-phosphate = D-glucosamine 6-phosphate. Functionally, catalyzes the conversion of glucosamine-6-phosphate to glucosamine-1-phosphate. The sequence is that of Phosphoglucosamine mutase from Shouchella clausii (strain KSM-K16) (Alkalihalobacillus clausii).